A 203-amino-acid chain; its full sequence is Glycerol-3-phosphate acyltransferase (203 aa).

The next 4 membrane-spanning stretches (helical) occupy residues 4–24 (LTFA…AVLI), 68–88 (IPVY…FIGI), 104–124 (GGKG…DMGS), and 125–145 (FMIV…LAAI).

Belongs to the PlsY family. As to quaternary structure, probably interacts with PlsX.

Its subcellular location is the cell inner membrane. The enzyme catalyses an acyl phosphate + sn-glycerol 3-phosphate = a 1-acyl-sn-glycero-3-phosphate + phosphate. The protein operates within lipid metabolism; phospholipid metabolism. Its function is as follows. Catalyzes the transfer of an acyl group from acyl-phosphate (acyl-PO(4)) to glycerol-3-phosphate (G3P) to form lysophosphatidic acid (LPA). This enzyme utilizes acyl-phosphate as fatty acyl donor, but not acyl-CoA or acyl-ACP. The protein is Glycerol-3-phosphate acyltransferase of Tolumonas auensis (strain DSM 9187 / NBRC 110442 / TA 4).